Here is a 236-residue protein sequence, read N- to C-terminus: Large ribosomal subunit protein uL1 (236 aa).

It belongs to the universal ribosomal protein uL1 family. In terms of assembly, part of the 50S ribosomal subunit.

Functionally, binds directly to 23S rRNA. The L1 stalk is quite mobile in the ribosome, and is involved in E site tRNA release. In terms of biological role, protein L1 is also a translational repressor protein, it controls the translation of the L11 operon by binding to its mRNA. The sequence is that of Large ribosomal subunit protein uL1 from Corynebacterium efficiens (strain DSM 44549 / YS-314 / AJ 12310 / JCM 11189 / NBRC 100395).